A 147-amino-acid polypeptide reads, in one-letter code: Hemoglobin subunit beta-1 (147 aa).

N-acetylvaline is present on valine 2. The Globin domain occupies 3–147 (HLTDAEKAAV…VATALAHKYH (145 aa)). An N6-succinyllysine modification is found at lysine 18. A phosphoserine mark is found at serine 21, serine 45, and serine 51. At lysine 60 the chain carries N6-succinyllysine. Residues histidine 64 and histidine 93 each contribute to the heme b site. Arginine 105 is subject to Asymmetric dimethylarginine. A Phosphothreonine modification is found at threonine 124.

It belongs to the globin family. In terms of assembly, heterotetramer of two alpha chains and two beta chains. In terms of tissue distribution, red blood cells.

In terms of biological role, involved in oxygen transport from the lung to the various peripheral tissues. The chain is Hemoglobin subunit beta-1 (Hbb-b1) from Mus musculus (Mouse).